A 230-amino-acid chain; its full sequence is Large ribosomal subunit protein uL1 (230 aa).

This sequence belongs to the universal ribosomal protein uL1 family. In terms of assembly, part of the 50S ribosomal subunit.

In terms of biological role, binds directly to 23S rRNA. The L1 stalk is quite mobile in the ribosome, and is involved in E site tRNA release. Functionally, protein L1 is also a translational repressor protein, it controls the translation of the L11 operon by binding to its mRNA. This Afipia carboxidovorans (strain ATCC 49405 / DSM 1227 / KCTC 32145 / OM5) (Oligotropha carboxidovorans) protein is Large ribosomal subunit protein uL1.